A 210-amino-acid polypeptide reads, in one-letter code: Dephospho-CoA kinase (210 aa).

The region spanning 4-201 (IVALTGGICS…NFYIYLSKQN (198 aa)) is the DPCK domain. 12-17 (CSGKTT) serves as a coordination point for ATP.

This sequence belongs to the CoaE family.

It localises to the cytoplasm. The catalysed reaction is 3'-dephospho-CoA + ATP = ADP + CoA + H(+). It participates in cofactor biosynthesis; coenzyme A biosynthesis; CoA from (R)-pantothenate: step 5/5. Catalyzes the phosphorylation of the 3'-hydroxyl group of dephosphocoenzyme A to form coenzyme A. The chain is Dephospho-CoA kinase from Buchnera aphidicola subsp. Schizaphis graminum (strain Sg).